Consider the following 240-residue polypeptide: UDP-2,3-diacylglucosamine hydrolase (240 aa).

Residues Asp-8, His-10, Asp-41, Asn-79, and His-114 each contribute to the Mn(2+) site. 79–80 (NR) is a substrate binding site. Asp-122, Ser-160, Asn-164, Lys-167, and His-195 together coordinate substrate. Positions 195 and 197 each coordinate Mn(2+).

This sequence belongs to the LpxH family. Requires Mn(2+) as cofactor.

The protein localises to the cell inner membrane. It carries out the reaction UDP-2-N,3-O-bis[(3R)-3-hydroxytetradecanoyl]-alpha-D-glucosamine + H2O = 2-N,3-O-bis[(3R)-3-hydroxytetradecanoyl]-alpha-D-glucosaminyl 1-phosphate + UMP + 2 H(+). It functions in the pathway glycolipid biosynthesis; lipid IV(A) biosynthesis; lipid IV(A) from (3R)-3-hydroxytetradecanoyl-[acyl-carrier-protein] and UDP-N-acetyl-alpha-D-glucosamine: step 4/6. Hydrolyzes the pyrophosphate bond of UDP-2,3-diacylglucosamine to yield 2,3-diacylglucosamine 1-phosphate (lipid X) and UMP by catalyzing the attack of water at the alpha-P atom. Involved in the biosynthesis of lipid A, a phosphorylated glycolipid that anchors the lipopolysaccharide to the outer membrane of the cell. This chain is UDP-2,3-diacylglucosamine hydrolase, found in Photorhabdus laumondii subsp. laumondii (strain DSM 15139 / CIP 105565 / TT01) (Photorhabdus luminescens subsp. laumondii).